A 556-amino-acid polypeptide reads, in one-letter code: Formate--tetrahydrofolate ligase (556 aa).

65-72 (TSAGEGKT) contributes to the ATP binding site.

The protein belongs to the formate--tetrahydrofolate ligase family.

The catalysed reaction is (6S)-5,6,7,8-tetrahydrofolate + formate + ATP = (6R)-10-formyltetrahydrofolate + ADP + phosphate. The protein operates within one-carbon metabolism; tetrahydrofolate interconversion. The protein is Formate--tetrahydrofolate ligase of Kosmotoga olearia (strain ATCC BAA-1733 / DSM 21960 / TBF 19.5.1).